A 121-amino-acid polypeptide reads, in one-letter code: Small ribosomal subunit protein uS11 (121 aa).

It belongs to the universal ribosomal protein uS11 family. Part of the 30S ribosomal subunit. Interacts with proteins S7 and S18. Binds to IF-3.

Located on the platform of the 30S subunit, it bridges several disparate RNA helices of the 16S rRNA. Forms part of the Shine-Dalgarno cleft in the 70S ribosome. This Mycoplasma pneumoniae (strain ATCC 29342 / M129 / Subtype 1) (Mycoplasmoides pneumoniae) protein is Small ribosomal subunit protein uS11.